A 108-amino-acid chain; its full sequence is UPF0060 membrane protein RHOS4_03690 (108 aa).

The next 4 membrane-spanning stretches (helical) occupy residues 5-25 (LAAY…VWAW), 32-52 (ALWL…LALT), 62-82 (AVYG…VEGV), and 86-106 (RWDM…LWAP).

This sequence belongs to the UPF0060 family.

It is found in the cell inner membrane. The polypeptide is UPF0060 membrane protein RHOS4_03690 (Cereibacter sphaeroides (strain ATCC 17023 / DSM 158 / JCM 6121 / CCUG 31486 / LMG 2827 / NBRC 12203 / NCIMB 8253 / ATH 2.4.1.) (Rhodobacter sphaeroides)).